Consider the following 103-residue polypeptide: Large ribosomal subunit protein bL21 (103 aa).

Belongs to the bacterial ribosomal protein bL21 family. As to quaternary structure, part of the 50S ribosomal subunit. Contacts protein L20.

Functionally, this protein binds to 23S rRNA in the presence of protein L20. This is Large ribosomal subunit protein bL21 from Vibrio cholerae serotype O1 (strain ATCC 39541 / Classical Ogawa 395 / O395).